The following is a 732-amino-acid chain: Protein DIA2 (732 aa).

TPR repeat units lie at residues 15-48 (VLKA…CDSY), 78-111 (IKIL…EPGN), and 113-145 (KCYI…CNND). Positions 204–251 (TDLVGNLPIEILPIIFQRFTTKELVTLSLVCNKWRDKILYHLDCFQEF) constitute an F-box domain. Position 393 is a phosphoserine (S393). LRR repeat units lie at residues 425–449 (LEKI…LLRG), 480–505 (FPDL…LLKF), 509–532 (WKNL…DEDQ), 550–574 (LQNL…LCEQ), 579–602 (GRKL…HAHT), 616–637 (LSKL…TMKS), and 645–669 (LENL…EFLK).

The protein belongs to the DIA2 family. Component of the SCF(DIA2) complex containing CDC53, SKP1, RBX1 and DIA2. Interacts with SKP1.

The protein resides in the nucleus. F-box protein component of a SCF (SKP1-CUL1-F-box protein) E3 ubiquitin-protein ligase complex which mediates the ubiquitination and subsequent proteasomal degradation of target proteins. Probably recognizes and binds to phosphorylated target proteins. The SCF(DIA2) complex is specifically involved in the pheromone induced degradation of phosphorylated TEC1. The SCF(DIA2) complex binds to DNA replication origins. Involved in DNA replication, genome stability, and the control of cell cycle, probably through its association to replication origins to facilitate the ubiquitination of another origin-binding protein. Required for invasive growth and growth under alkaline conditions. This is Protein DIA2 (DIA2) from Saccharomyces cerevisiae (strain ATCC 204508 / S288c) (Baker's yeast).